A 359-amino-acid polypeptide reads, in one-letter code: Threonine dehydratase biosynthetic, chloroplastic (359 aa).

2 consecutive ACT-like domains span residues 184–256 and 278–349; these read ALLA…NFSH and IFGE…LDNS.

It belongs to the serine/threonine dehydratase family. Homotetramer. The cofactor is pyridoxal 5'-phosphate. As to expression, floral buds of untreated plants. After ABA treatment or mechanical wounding is mostly accumulated in leaves, to a lesser extent in stems, but not in roots. Expressed in anthers, carpel leaves, pith cells, sepals and petals. Not expressed in stomium, vascular bundles, epidermal cells or pollen mother cells.

The protein localises to the plastid. The protein resides in the chloroplast. It catalyses the reaction L-threonine = 2-oxobutanoate + NH4(+). It functions in the pathway amino-acid biosynthesis; L-isoleucine biosynthesis; 2-oxobutanoate from L-threonine: step 1/1. This chain is Threonine dehydratase biosynthetic, chloroplastic, found in Solanum tuberosum (Potato).